A 706-amino-acid polypeptide reads, in one-letter code: Alpha-hemolysin translocation ATP-binding protein HlyB (706 aa).

Residues 1–125 (MMSKCSSHNS…KLYQGKVILV (125 aa)) form the Peptidase C39 domain. His-83 is an active-site residue. 5 helical membrane passes run 153–173 (ILLE…ITPL), 191–211 (LNII…LTGA), 269–289 (ALTS…MWYY), 295–315 (LVIL…SPLL), and 388–408 (VMVI…ISIG). The region spanning 154 to 436 (LLEVLTVSAF…LAHLWQDFQQ (283 aa)) is the ABC transmembrane type-1 domain. The ABC transporter domain maps to 468-703 (IEFKNVRFRY…KDSLYAYLYQ (236 aa)). Position 502–509 (502–509 (GRSGSGKS)) interacts with ATP.

This sequence belongs to the ABC transporter superfamily. Protein-1 exporter (TC 3.A.1.109) family. As to quaternary structure, homodimer.

Its subcellular location is the cell inner membrane. In terms of biological role, part of the ABC transporter complex HlyBD involved in hemolysin export. Transmembrane domains (TMD) form a pore in the inner membrane and the ATP-binding domain (NBD) is responsible for energy generation. This Escherichia coli O157:H7 protein is Alpha-hemolysin translocation ATP-binding protein HlyB (hlyB).